We begin with the raw amino-acid sequence, 253 residues long: HTH-type transcriptional activator TipA (253 aa).

The HTH merR-type domain occupies 1 to 71 (MSYSVGQVAG…LDEVAALLDD (71 aa)). The segment at residues 5 to 24 (VGQVAGFAGVTVRTLHHYDD) is a DNA-binding region (H-T-H motif).

As to quaternary structure, homodimer.

In terms of biological role, transcriptional activator. Is activated when bound to the antibiotic thiostrepton. The protein is HTH-type transcriptional activator TipA (tipA) of Streptomyces coelicolor (strain ATCC BAA-471 / A3(2) / M145).